The following is a 139-amino-acid chain: uncharacterized protein (139 aa).

One can recognise a VOC domain in the interval Gln9–Ser133.

This is an uncharacterized protein from Bacillus subtilis (strain 168).